The primary structure comprises 184 residues: Photosystem I assembly protein Ycf4 (184 aa).

Transmembrane regions (helical) follow at residues 22 to 42 (FCWA…GTSS) and 57 to 77 (ILFF…LFIS).

The protein belongs to the Ycf4 family.

The protein localises to the plastid. It localises to the chloroplast thylakoid membrane. Functionally, seems to be required for the assembly of the photosystem I complex. The polypeptide is Photosystem I assembly protein Ycf4 (Liriodendron tulipifera (Tuliptree)).